The sequence spans 435 residues: Ribulose bisphosphate carboxylase large chain (435 aa).

N6,N6,N6-trimethyllysine is present on Lys5. The substrate site is built by Asn114 and Thr164. Catalysis depends on Lys166, which acts as the Proton acceptor. Position 168 (Lys168) interacts with substrate. Positions 192, 194, and 195 each coordinate Mg(2+). N6-carboxylysine is present on Lys192. His285 acts as the Proton acceptor in catalysis. Arg286, His318, and Ser370 together coordinate substrate.

The protein belongs to the RuBisCO large chain family. Type I subfamily. Heterohexadecamer of 8 large chains and 8 small chains; disulfide-linked. The disulfide link is formed within the large subunit homodimers. The cofactor is Mg(2+). Post-translationally, the disulfide bond which can form in the large chain dimeric partners within the hexadecamer appears to be associated with oxidative stress and protein turnover.

It localises to the plastid. The protein resides in the chloroplast. It catalyses the reaction 2 (2R)-3-phosphoglycerate + 2 H(+) = D-ribulose 1,5-bisphosphate + CO2 + H2O. The catalysed reaction is D-ribulose 1,5-bisphosphate + O2 = 2-phosphoglycolate + (2R)-3-phosphoglycerate + 2 H(+). In terms of biological role, ruBisCO catalyzes two reactions: the carboxylation of D-ribulose 1,5-bisphosphate, the primary event in carbon dioxide fixation, as well as the oxidative fragmentation of the pentose substrate in the photorespiration process. Both reactions occur simultaneously and in competition at the same active site. The protein is Ribulose bisphosphate carboxylase large chain of Drosera burmannii (Burmese sundew).